A 573-amino-acid chain; its full sequence is METEHLKRLEAKEADHIPAILDEFNTKNADLLVFDSFRTDNLWHELWLAIFGILDDQRLSHLHTQCLNTVRILTRDEFSLQTNYIEQEVNTLLKLARIEAGSLKLPATPDELKQEEREEPQLEPSQAQSEVIAEALKCLCNLVYQSSDCRRQCLRQHCLDAILKRVASSMRHPCALEYYDMKLLFLLTALEPAARSRLQIDLNGLTYMTKWLDDKLGEDSVGEEQLNIICELLKVMFNVTSAPDKSPNEYEIQSLHLTGVLRELLLRFGDLATEKDRAVVTHAINLLTNISGSCLTELTLRCSNAELESHKEREQDNEKEKDTEAGAGAKPRECCSQCFEKRNVRSLDVLLRYLRQSLAQQEAEASSHELLSPVLTVLVKCARSDRVMRHYLRQEILPPLRDVSQRPEVGQELRNHLCRFLTLPAMILRDLSAELLFVLCKENVGRMIKYTGYGNAAGLFAKRGILDCRRVEGTDYSSDSEDSDTEEYKQQQQGINPVLGCVEPRSKSHLDDISEEQKEYEAMQLVNLIEQLRQGGIVKPAMIDKDGRPQPLEHILQLQEELPQQQLDQKRKT.

The span at 308 to 324 shows a compositional bias: basic and acidic residues; it reads ESHKEREQDNEKEKDTE. Disordered regions lie at residues 308–329 and 473–493; these read ESHK…GAGA and GTDY…QQQQ. Phosphoserine is present on residues Ser477, Ser478, Ser480, and Ser483.

The protein belongs to the synembryn family. In terms of assembly, interacts with GDP-bound G(i)-alpha protein G-i-alpha-65A. Does not interact with G-alpha proteins when they are in complex with subunits beta and gamma. Interacts with Frq2 in a Ca(2+)-independent manner but does not interact with Frq1. In terms of tissue distribution, expression in the embryo is primarily neural.

Its subcellular location is the cytoplasm. It localises to the cell cortex. It is found in the presynapse. Functionally, chaperone that specifically binds and folds some, but not all, nascent G alpha proteins prior to G protein heterotrimer formation, promoting their stability and activity. Also acts as a guanine nucleotide exchange factor (GEF) for G alpha proteins by stimulating exchange of bound GDP for free GTP. Plays a key role in asymmetric spindle positioning, a step for asymmetric cell division that generates cell diversity during development by activating G(i) alpha protein independently of G-protein coupled receptors. Required during gastrulation and sensory organ precursor (SOP) formation. Plays a role in positively regulating synapse number and neurotransmitter release. The protein is Chaperone Ric-8 (ric8a) of Drosophila melanogaster (Fruit fly).